A 225-amino-acid polypeptide reads, in one-letter code: Techylectin-like protein (225 aa).

The region spanning C32–K225 is the Fibrinogen C-terminal domain. A disulfide bridge links C41 with C60. The Cell attachment site signature appears at R75–D77. The Ca(2+) site is built by D164 and T170. Residues C172 and C185 are joined by a disulfide bond.

As to expression, expressed by the venom gland.

It localises to the secreted. In terms of biological role, lectin involved in innate immunity. The chain is Techylectin-like protein from Phoneutria nigriventer (Brazilian armed spider).